A 348-amino-acid polypeptide reads, in one-letter code: Protein RecA (348 aa).

64-71 provides a ligand contact to ATP; the sequence is GPESSGKT. A compositionally biased stretch (basic and acidic residues) spans 325–335; sequence YEIDGASKEPL. The segment at 325–348 is disordered; the sequence is YEIDGASKEPLEETEETLSLLDDE. Over residues 336-348 the composition is skewed to acidic residues; the sequence is EETEETLSLLDDE.

Belongs to the RecA family.

The protein localises to the cytoplasm. Functionally, can catalyze the hydrolysis of ATP in the presence of single-stranded DNA, the ATP-dependent uptake of single-stranded DNA by duplex DNA, and the ATP-dependent hybridization of homologous single-stranded DNAs. It interacts with LexA causing its activation and leading to its autocatalytic cleavage. This Listeria seeligeri protein is Protein RecA.